An 86-amino-acid polypeptide reads, in one-letter code: UPF0297 protein LCABL_08470 (86 aa).

This sequence belongs to the UPF0297 family.

The sequence is that of UPF0297 protein LCABL_08470 from Lacticaseibacillus casei (strain BL23) (Lactobacillus casei).